The primary structure comprises 151 residues: Small heat shock protein HspD (151 aa).

Positions 28–138 (RATEDNYPPY…KPRRIAINGA (111 aa)) constitute a sHSP domain.

The protein belongs to the small heat shock protein (HSP20) family.

This Bradyrhizobium diazoefficiens (strain JCM 10833 / BCRC 13528 / IAM 13628 / NBRC 14792 / USDA 110) protein is Small heat shock protein HspD (hspD).